The chain runs to 270 residues: Formamidopyrimidine-DNA glycosylase (270 aa).

Catalysis depends on Pro-2, which acts as the Schiff-base intermediate with DNA. Residue Glu-3 is the Proton donor of the active site. Lys-58 functions as the Proton donor; for beta-elimination activity in the catalytic mechanism. DNA contacts are provided by His-91, Arg-110, and Arg-151. Residues 236-270 (FVYGRGGEFCKSCGSTLREIRLGQRASVYCSRCQR) form an FPG-type zinc finger. Residue Arg-260 is the Proton donor; for delta-elimination activity of the active site.

This sequence belongs to the FPG family. In terms of assembly, monomer. Zn(2+) serves as cofactor.

The catalysed reaction is Hydrolysis of DNA containing ring-opened 7-methylguanine residues, releasing 2,6-diamino-4-hydroxy-5-(N-methyl)formamidopyrimidine.. It carries out the reaction 2'-deoxyribonucleotide-(2'-deoxyribose 5'-phosphate)-2'-deoxyribonucleotide-DNA = a 3'-end 2'-deoxyribonucleotide-(2,3-dehydro-2,3-deoxyribose 5'-phosphate)-DNA + a 5'-end 5'-phospho-2'-deoxyribonucleoside-DNA + H(+). Involved in base excision repair of DNA damaged by oxidation or by mutagenic agents. Acts as a DNA glycosylase that recognizes and removes damaged bases. Has a preference for oxidized purines, such as 7,8-dihydro-8-oxoguanine (8-oxoG). Has AP (apurinic/apyrimidinic) lyase activity and introduces nicks in the DNA strand. Cleaves the DNA backbone by beta-delta elimination to generate a single-strand break at the site of the removed base with both 3'- and 5'-phosphates. This chain is Formamidopyrimidine-DNA glycosylase, found in Stutzerimonas stutzeri (strain A1501) (Pseudomonas stutzeri).